Consider the following 3423-residue polypeptide: Genome polyprotein (3423 aa).

The disordered stretch occupies residues 1 to 25 (MKNPKKKSGGFRIVNMLKRGVARVS). At 1–104 (MKNPKKKSGG…INARKEKKRR (104 aa)) the chain is on the cytoplasmic side. Positions 37-72 (LLLGHGPIRMVLAILAFLRFTAIKPSLGLINRWGSV) are hydrophobic; homodimerization of capsid protein C. Positions 105-122 (GADTSVGIVGLLLTTAMA) are cleaved as a propeptide — ER anchor for capsid protein C, removed in mature form by serine protease NS3. The chain crosses the membrane as a helical span at residues 105–125 (GADTSVGIVGLLLTTAMAAEV). Topologically, residues 126–249 (TRRGSAYYMY…YTKHLIRVEN (124 aa)) are extracellular. Residue asparagine 192 is glycosylated (N-linked (GlcNAc...) asparagine; by host). Residues 250-269 (WIFRNPGFALAAAAIAWLLG) form a helical membrane-spanning segment. The Cytoplasmic segment spans residues 270 to 274 (SSTSQ). A helical membrane pass occupies residues 275 to 290 (KVIYLVMILLIAPAYS). The Extracellular segment spans residues 291 to 745 (IRCIGVSNRD…HQIFGAAFKS (455 aa)). A Glycyl lysine isopeptide (Lys-Gly) (interchain with G-Cter in ubiquitin) cross-link involves residue lysine 328. Disulfide bonds link cysteine 350-cysteine 406 and cysteine 382-cysteine 411. A fusion peptide region spans residues 388–401 (DRGWGNGCGLFGKG). N-linked (GlcNAc...) asparagine; by host glycosylation is present at asparagine 444. Disulfide bonds link cysteine 480-cysteine 581 and cysteine 598-cysteine 629. Residue lysine 571 forms a Glycyl lysine isopeptide (Lys-Gly) (interchain with G-Cter in ubiquitin) linkage. Residues 746 to 767 (LFGGMSWFSQILIGTLLMWLGL) form a helical membrane-spanning segment. The Cytoplasmic portion of the chain corresponds to 768–773 (NTKNGS). The helical transmembrane segment at 774 to 794 (ISLMCLALGGVLIFLSTAVSA) threads the bilayer. Over 795-1177 (DVGCSVDFSK…EGLKKRMTTK (383 aa)) the chain is Lumenal. 6 cysteine pairs are disulfide-bonded: cysteine 798–cysteine 809, cysteine 849–cysteine 937, cysteine 973–cysteine 1017, cysteine 1074–cysteine 1123, cysteine 1085–cysteine 1106, and cysteine 1107–cysteine 1110. N-linked (GlcNAc...) asparagine; by host glycosylation is found at asparagine 924 and asparagine 1001. The helical transmembrane segment at 1178 to 1198 (IIISTSMAVLVAMILGGFSMS) threads the bilayer. The Cytoplasmic segment spans residues 1199–1220 (DLAKLAILMGATFAEMNTGGDV). The helical transmembrane segment at 1221–1241 (AHLALIAAFKVRPALLVSFIF) threads the bilayer. The Lumenal portion of the chain corresponds to 1242–1270 (RANWTPRESMLLALASCLLQTAISALEGD). Residues 1271 to 1291 (LMVLINGFALAWLAIRAMVVP) form a helical membrane-spanning segment. Residues 1292-1295 (RTDN) lie on the Cytoplasmic side of the membrane. Residues 1296-1316 (ITLAILAALTPLARGTLLVAW) traverse the membrane as a helical segment. Over 1317-1345 (RAGLATCGGFMLLSLKGKGSVKKNLPFVM) the chain is Lumenal. Residues 1346 to 1366 (ALGLTAVRLVDPINVVGLLLL) traverse the membrane as a helical segment. The Cytoplasmic portion of the chain corresponds to 1367-1373 (TRSGKRS). The helical transmembrane segment at 1374–1394 (WPPSEVLTAVGLICALAGGFA) threads the bilayer. Residues 1395–1397 (KAD) are Lumenal-facing. A helical transmembrane segment spans residues 1398–1418 (IEMAGPMAAVGLLIVSYVVSG). Topologically, residues 1419–1472 (KSVDMYIERAGDITWEKDAEVTGNSPRLDVALDESGDFSLVEDDGPPMREIILK) are cytoplasmic. Positions 1425-1464 (IERAGDITWEKDAEVTGNSPRLDVALDESGDFSLVEDDGP) are interacts with and activates NS3 protease. A disordered region spans residues 1429 to 1451 (GDITWEKDAEVTGNSPRLDVALD). Residues 1473 to 1493 (VVLMTICGMNPIAIPFAAGAW) constitute an intramembrane region (helical). Topologically, residues 1494 to 2170 (YVYVKTGKRS…KAAAAQLPET (677 aa)) are lumenal. Residues 1503 to 1680 (SGALWDVPAP…RREEETPVEC (178 aa)) enclose the Peptidase S7 domain. Active-site charge relay system; for serine protease NS3 activity residues include histidine 1553, aspartate 1577, and serine 1637. In terms of domain architecture, Helicase ATP-binding spans 1683-1839 (PSMLKKKQLT…DSNSPIMDTE (157 aa)). Positions 1687-1690 (KKKQ) are important for RNA-binding. 1696–1703 (LHPGAGKT) lines the ATP pocket. The DEAH box motif lies at 1787 to 1790 (DEAH). The region spanning 1834 to 2013 (PIMDTEVEVP…GLIASLYRPE (180 aa)) is the Helicase C-terminal domain. At lysine 1891 the chain carries N6-acetyllysine; by host. The chain crosses the membrane as a helical span at residues 2171–2191 (LETIMLLGLLGTVSLGIFFVL). At 2192-2195 (MRNK) the chain is on the lumenal side. The helical intramembrane region spans 2196–2216 (GIGKMGFGMVTLGASAWLMWL). Topologically, residues 2217-2218 (SE) are cytoplasmic. The chain crosses the membrane as a helical span at residues 2219-2239 (IEPARIACVLIVVFLLLVVLI). Residues 2240–2254 (PEPEKQRSPQDNQMA) lie on the Lumenal side of the membrane. The segment at residues 2255–2269 (IIIMVAVGLLGLITA) is an intramembrane region (helical). Topologically, residues 2270–2307 (NELGWLERTKSDLSHLMGRREEGATIGFSMDIDLRPAS) are lumenal. Positions 2308 to 2328 (AWAIYAALTTFITPAVQHAVT) form an intramembrane region, helical. At 2329–2344 (TSYNNYSLMAMATQAG) the chain is on the lumenal side. The chain crosses the membrane as a helical span at residues 2345 to 2365 (VLFGMGKGMPFYAWDFGVPLL). Residues 2366–2375 (MIGCYSQLTP) lie on the Cytoplasmic side of the membrane. Residues 2376–2396 (LTLIVAIILLVAHYMYLIPGL) traverse the membrane as a helical segment. The Lumenal segment spans residues 2397 to 2441 (QAAAARAAQKRTAAGIMKNPVVDGIVVTDIDTMTIDPQVEKKMGQ). A helical transmembrane segment spans residues 2442–2462 (VLLIAVAVSSAILSRTAWGWG). Residues 2463–3423 (EAGALITAAT…GEEGSTPGVL (961 aa)) lie on the Cytoplasmic side of the membrane. The 265-residue stretch at 2521–2785 (GGGTGETLGE…DVNLGSGTRA (265 aa)) folds into the mRNA cap 0-1 NS5-type MT domain. 2533–2539 (KARLNQM) serves as a coordination point for GTP. Serine 2576 provides a ligand contact to S-adenosyl-L-methionine. Serine 2576 bears the Phosphoserine mark. Lysine 2581 serves as the catalytic For 2'-O-MTase activity. The interval 2597–2600 (VIDL) is SUMO-interacting motif (SIM). The S-adenosyl-L-methionine site is built by glycine 2606, tryptophan 2607, threonine 2624, lysine 2625, histidine 2630, glutamate 2631, aspartate 2651, valine 2652, aspartate 2666, and isoleucine 2667. Aspartate 2666 serves as the catalytic For 2'-O-MTase activity. 2669 to 2675 (ESSSSPE) provides a ligand contact to GTP. The For 2'-O-MTase activity role is filled by lysine 2702. Position 2733-2735 (2733-2735 (RNS)) interacts with GTP. Glutamate 2738 (for 2'-O-MTase activity) is an active-site residue. Tyrosine 2740 lines the S-adenosyl-L-methionine pocket. Residues 2908 to 2914 (KHKRPRV) carry the Nuclear localization signal (NLS) motif. Zn(2+) contacts are provided by glutamate 2959, histidine 2963, cysteine 2968, and cysteine 2971. Positions 3049 to 3199 (GRMYADDTAG…KPIDDRFAHA (151 aa)) constitute a RdRp catalytic domain. Histidine 3234, cysteine 3250, and cysteine 3369 together coordinate Zn(2+).

In the N-terminal section; belongs to the class I-like SAM-binding methyltransferase superfamily. mRNA cap 0-1 NS5-type methyltransferase family. Homodimer. Interacts with host SERTAD3; this interaction promotes capsid protein C degradation. Interacts with host CAPRIN1; this interaction is probably linked to the inhibition of stress granules formation by the virus. Interacts with host G3BP1; this interaction is probably linked to the inhibition of stress granules formation by the virus. As to quaternary structure, forms heterodimers with envelope protein E in the endoplasmic reticulum and Golgi. Interacts with non-structural protein 2A. In terms of assembly, homodimer; in the endoplasmic reticulum and Golgi. Interacts with host TYRO3, AXL and DC-SIGN proteins. Interacts with non-structural protein 2A. Interacts with host HAVCR1; this interaction likely mediates virus attachment to host cell. Interacts with host NCAM1. Interacts with host HSPA5. Interacts with Aedes aegypti SRPN25, APY and venom allergen-1 salivary proteins; the interactions do not affect Zika virus replication in human endothelial cells and keratinocytes. Homodimer; Homohexamer when secreted. Interacts with host TBK1. Interacts with host USP8. Interacts with envelope protein E. As to quaternary structure, interacts with the structural protein prM/E complex, and the NS2B/NS3 protease complex. In terms of assembly, forms a heterodimer with serine protease NS3. May form homooligomers. Interacts with human SPCS1. Interacts with non-structural protein 2A. Forms a heterodimer with NS2B. Interacts with NS4B. Interacts with unphosphorylated RNA-directed RNA polymerase NS5; this interaction stimulates RNA-directed RNA polymerase NS5 guanylyltransferase activity. Interacts with non-structural protein 2A. Interacts with host SHFL; this interaction promotes NS3 degradation via a lysosome-dependent pathway. Interacts with host CEP63; this interaction disorganizes the centrosome and inhibits host innate immune response. As to quaternary structure, may interact with host ANKLE2; the interaction may cause defects in brain development, such as microcephaly. May interact with host SRPRA and SEC61G. In terms of assembly, interacts with serine protease NS3. Interacts with NS1. Homodimer; dimerization may negatively regulate the GTase activity, a crucial step in the capping process. Interacts with host STAT2; this interaction inhibits the phosphorylation of the latter, and, when all viral proteins are present (polyprotein), targets STAT2 for degradation. Interacts with host TBK1 and IKBKE; these interactions lead to the inhibition of the host RIG-I signaling pathway. Interacts with host PAF1 complex; the interaction may prevent the recruitment of the host PAF1 complex to interferon-responsive genes, and thus reduces the immune response. Interacts with serine protease NS3. Interacts with host KPNA2. Interacts with host ZSWIM8; this interaction allows STAT2 binding to ZSWIM8 and subsequent proteasomal degradation leading to inhibition of interferon signaling. Specific enzymatic cleavages in vivo yield mature proteins. Cleavages in the lumen of endoplasmic reticulum are performed by host signal peptidase, whereas cleavages in the cytoplasmic side are performed by serine protease NS3. Signal cleavage at the 2K-4B site requires a prior NS3 protease-mediated cleavage at the 4A-2K site. Post-translationally, cleaved in post-Golgi vesicles by a host furin, releasing the mature small envelope protein M, and peptide pr. This cleavage is incomplete as up to 30% of viral particles still carry uncleaved prM. In terms of processing, N-glycosylation plays a role in virulence in mammalian and mosquito hosts, but may have no effect on neurovirulence. Ubiquitination by host TRIM7 promotes virus attachment and fusion of the virus and the host endosome membrane. Post-translationally, N-glycosylated. The excreted form is glycosylated, which is required for efficient secretion of the protein from infected cells. In terms of processing, ubiquitination by host TRIM22 leads to proteasomal degradation. Acetylated by host KAT5. Acetylation modulates NS3 RNA-binding and unwinding activities and plays an important positive role for viral replication. Post-translationally, phosphorylated on serines residues. This phosphorylation may trigger NS5 nuclear localization. In terms of processing, sumoylated, required for regulating IFN induced interferon stimulated genes/ISGs.

Its subcellular location is the virion. It localises to the host nucleus. The protein resides in the host cytoplasm. The protein localises to the host perinuclear region. It is found in the secreted. Its subcellular location is the virion membrane. It localises to the host endoplasmic reticulum membrane. The catalysed reaction is a 5'-end (5'-triphosphoguanosine)-ribonucleoside in mRNA + S-adenosyl-L-methionine = a 5'-end (N(7)-methyl 5'-triphosphoguanosine)-ribonucleoside in mRNA + S-adenosyl-L-homocysteine. The enzyme catalyses a 5'-end (N(7)-methyl 5'-triphosphoguanosine)-ribonucleoside in mRNA + S-adenosyl-L-methionine = a 5'-end (N(7)-methyl 5'-triphosphoguanosine)-(2'-O-methyl-ribonucleoside) in mRNA + S-adenosyl-L-homocysteine + H(+). It carries out the reaction RNA(n) + a ribonucleoside 5'-triphosphate = RNA(n+1) + diphosphate. It catalyses the reaction Selective hydrolysis of -Xaa-Xaa-|-Yaa- bonds in which each of the Xaa can be either Arg or Lys and Yaa can be either Ser or Ala.. The catalysed reaction is a ribonucleoside 5'-triphosphate + H2O = a ribonucleoside 5'-diphosphate + phosphate + H(+). The enzyme catalyses ATP + H2O = ADP + phosphate + H(+). Plays a role in virus budding by binding to the cell membrane and gathering the viral RNA into a nucleocapsid that forms the core of the mature virus particle. During virus entry, may induce genome penetration into the host cytoplasm after hemifusion induced by the surface proteins. Can migrate to the cell nucleus where it modulates host functions. Inhibits the integrated stress response (ISR) in the infected cell. In terms of biological role, inhibits RNA silencing by interfering with host Dicer. Its function is as follows. Prevents premature fusion activity of envelope proteins in trans-Golgi by binding to envelope protein E at pH 6.0. After virion release in extracellular space, gets dissociated from E dimers. Functionally, plays a role in host immune defense modulation and protection of envelope protein E during virion synthesis. PrM-E cleavage is inefficient, many virions are only partially matured and immature prM-E proteins could play a role in immune evasion. Contributes to fetal microcephaly in humans. Acts as a chaperone for envelope protein E during intracellular virion assembly by masking and inactivating envelope protein E fusion peptide. prM is the only viral peptide matured by host furin in the trans-Golgi network probably to avoid catastrophic activation of the viral fusion activity in acidic Golgi compartment prior to virion release. May play a role in virus budding. Exerts cytotoxic effects by activating a mitochondrial apoptotic pathway through M ectodomain. May display a viroporin activity. In terms of biological role, binds to host cell surface receptors and mediates fusion between viral and cellular membranes. Efficient virus attachment to cell is, at least in part, mediated by host HAVCR1 in a cell-type specific manner. In addition, host NCAM1 can also be used as entry receptor. Interaction with host HSPA5 plays an important role in the early stages of infection as well. Envelope protein is synthesized in the endoplasmic reticulum and forms a heterodimer with protein prM. The heterodimer plays a role in virion budding in the ER, and the newly formed immature particle is covered with 60 spikes composed of heterodimers between precursor prM and envelope protein E. The virion is transported to the Golgi apparatus where the low pH causes the dissociation of PrM-E heterodimers and formation of E homodimers. PrM-E cleavage is inefficient, many virions are only partially matured and immature prM-E proteins could play a role in immune evasion. Its function is as follows. Plays a role in the inhibition of host RLR-induced interferon-beta activation by targeting TANK-binding kinase 1/TBK1. In addition, recruits the host deubiquitinase USP8 to cleave 'Lys-11'-linked polyubiquitin chains from caspase-1/CASP1 thus inhibiting its proteasomal degradation. In turn, stabilized CASP1 promotes cleavage of cGAS, which inhibits its ability to recognize mitochondrial DNA release and initiate type I interferon signaling. Functionally, component of the viral RNA replication complex that recruits genomic RNA, the structural protein prM/E complex, and the NS2B/NS3 protease complex to the virion assembly site and orchestrates virus morphogenesis. Antagonizes also the host MDA5-mediated induction of alpha/beta interferon antiviral response. May disrupt adherens junction formation and thereby impair proliferation of radial cells in the host cortex. Required cofactor for the serine protease function of NS3. In terms of biological role, displays three enzymatic activities: serine protease, NTPase and RNA helicase. NS3 serine protease, in association with NS2B, performs its autocleavage and cleaves the polyprotein at dibasic sites in the cytoplasm: C-prM, NS2A-NS2B, NS2B-NS3, NS3-NS4A, NS4A-2K and NS4B-NS5. NS3 RNA helicase binds RNA and unwinds dsRNA in the 3' to 5' direction. Inhibits the integrated stress response (ISR) in the infected cell by blocking stress granules assembly. Disrupts host centrosome organization in a CEP63-dependent manner to degrade host TBK1 and inhibits innate immune response. Its function is as follows. Regulates the ATPase activity of the NS3 helicase activity. NS4A allows NS3 helicase to conserve energy during unwinding. Cooperatively with NS4B suppresses the Akt-mTOR pathway and leads to cellular dysregulation. By inhibiting host ANKLE2 functions, may cause defects in brain development, such as microcephaly. Also antagonizes the host MDA5-mediated induction of alpha/beta interferon antiviral response. Inhibits the integrated stress response (ISR) in the infected cell by blocking stress granules assembly. Functionally, functions as a signal peptide for NS4B and is required for the interferon antagonism activity of the latter. Induces the formation of ER-derived membrane vesicles where the viral replication takes place. Also plays a role in the inhibition of host RLR-induced interferon-beta production at TANK-binding kinase 1/TBK1 level. Cooperatively with NS4A suppresses the Akt-mTOR pathway and leads to cellular dysregulation. In terms of biological role, replicates the viral (+) and (-) RNA genome, and performs the capping of genomes in the cytoplasm. Methylates viral RNA cap at guanine N-7 and ribose 2'-O positions. Once sufficient NS5 is expressed, binds to the cap-proximal structure and inhibits further translation of the viral genome. Besides its role in RNA genome replication, also prevents the establishment of a cellular antiviral state by blocking the interferon-alpha/beta (IFN-alpha/beta) signaling pathway. Mechanistically, interferes with host kinases TBK1 and IKKE upstream of interferon regulatory factor 3/IRF3 to inhibit the RIG-I pathway. Also antagonizes type I interferon signaling by targeting STAT2 for degradation by the proteasome thereby preventing activation of JAK-STAT signaling pathway. Mechanistically, acts as a scaffold protein to connect host ZSWIM8/CUL3 ligase complex and STAT2, leading to STAT2 degradation. Within the host nucleus, disrupts host SUMO1 and STAT2 co-localization with PML, resulting in PML degradation. May also reduce immune responses by preventing the recruitment of the host PAF1 complex to interferon-responsive genes. The protein is Genome polyprotein of Zika virus (isolate ZIKV/Human/French Polynesia/10087PF/2013) (ZIKV).